A 216-amino-acid chain; its full sequence is Glycerol uptake facilitator protein-like 6 (216 aa).

A run of 2 helical transmembrane segments spans residues 5 to 25 and 30 to 50; these read LAEF…VVIA and LAIG…FGGI. The short motif at 56-58 is the NPA 1 element; sequence NPA. Transmembrane regions (helical) follow at residues 72–92, 114–134, and 147–167; these read ADAI…SAAV, IGSG…LMVI, and FAGL…LNLT. Positions 172–174 match the NPA 2 motif; that stretch reads NPA. Residues 191–213 traverse the membrane as a helical segment; it reads LWVYILAPEVGAILAAFCARVMG.

It belongs to the MIP/aquaporin (TC 1.A.8) family.

It is found in the cell membrane. Functionally, probable transporter that facilitates the transmembrane diffusion of an unknown substrate. Is not permeable to water, dihydroxyacetone, glycerol, urea, H(2)O(2) and D/L-lactic acid. In Lactiplantibacillus plantarum (strain ATCC BAA-793 / NCIMB 8826 / WCFS1) (Lactobacillus plantarum), this protein is Glycerol uptake facilitator protein-like 6.